Here is a 604-residue protein sequence, read N- to C-terminus: Sulfite reductase [NADPH] flavoprotein alpha-component (604 aa).

The 139-residue stretch at Leu-68–Leu-206 folds into the Flavodoxin-like domain. FMN-binding positions include Ser-74–Ala-79, Ser-121–Gly-124, and Leu-157–Cys-166. In terms of domain architecture, FAD-binding FR-type spans Gln-239–Pro-453. Residues Thr-327, Gly-361, Arg-391–Ser-394, Thr-409–Gly-411, Tyr-415, and Gly-424–Ser-427 each bind FAD. NADP(+) contacts are provided by residues Ser-524–Arg-525, Lys-530–Gln-534, and Asp-566. Tyr-604 provides a ligand contact to FAD.

This sequence belongs to the NADPH-dependent sulphite reductase flavoprotein subunit CysJ family. In the N-terminal section; belongs to the flavodoxin family. It in the C-terminal section; belongs to the flavoprotein pyridine nucleotide cytochrome reductase family. In terms of assembly, alpha(8)-beta(8). The alpha component is a flavoprotein, the beta component is a hemoprotein. The cofactor is FAD. FMN serves as cofactor.

The catalysed reaction is hydrogen sulfide + 3 NADP(+) + 3 H2O = sulfite + 3 NADPH + 4 H(+). It functions in the pathway sulfur metabolism; hydrogen sulfide biosynthesis; hydrogen sulfide from sulfite (NADPH route): step 1/1. Component of the sulfite reductase complex that catalyzes the 6-electron reduction of sulfite to sulfide. This is one of several activities required for the biosynthesis of L-cysteine from sulfate. The flavoprotein component catalyzes the electron flow from NADPH -&gt; FAD -&gt; FMN to the hemoprotein component. In Aliivibrio fischeri (strain ATCC 700601 / ES114) (Vibrio fischeri), this protein is Sulfite reductase [NADPH] flavoprotein alpha-component.